A 235-amino-acid polypeptide reads, in one-letter code: Meiotically up-regulated gene 123 protein (235 aa).

The span at 1–14 shows a compositional bias: basic and acidic residues; that stretch reads MERLATRSSHDDPY. 3 disordered regions span residues 1 to 34, 58 to 83, and 169 to 235; these read MERL…SNGS, PLHS…GGMR, and SRAD…FDSD. Over residues 15–34 the composition is skewed to polar residues; that stretch reads SRSSLPTSNAINSNHESNGS. Low complexity predominate over residues 61-77; the sequence is SSPSIKSSSQNGKSSSK. The span at 176–202 shows a compositional bias: polar residues; the sequence is ETTQSDGFESRSGSPTHDIQSYLVNRR. Phosphoserine is present on residues Ser180, Ser187, and Ser189. At Thr191 the chain carries Phosphothreonine.

Its subcellular location is the cytoplasm. It localises to the nucleus. Involved in sporulation and has a role in meiosis. This is Meiotically up-regulated gene 123 protein (mug123) from Schizosaccharomyces pombe (strain 972 / ATCC 24843) (Fission yeast).